A 136-amino-acid chain; its full sequence is HTH-type transcriptional regulator LrpA (136 aa).

In terms of domain architecture, HTH asnC-type spans 2 to 63 (IDEIDKKILD…EVNQVKLGFS (62 aa)). A DNA-binding region (H-T-H motif) is located at residues 21–40 (MKKLGEKVHLTAPATASRVV).

Functionally, negative regulation of glyA transcription and kinB-dependent sporulation. The sequence is that of HTH-type transcriptional regulator LrpA (lrpA) from Bacillus subtilis (strain 168).